The chain runs to 343 residues: D-beta-hydroxybutyrate dehydrogenase, mitochondrial (343 aa).

A mitochondrion-targeting transit peptide spans 1 to 46; sequence MLAARLSRPLSQLPGKALSVRDRENGTRHTLLFYPASFSPDTRRTY. 60–84 lines the NAD(+) pocket; sequence ITGCDSGFGFSLAKHLHSKGFLVFA. Residues Lys73 and Lys97 each carry the N6-acetyllysine modification. Lys103 is modified (N6-acetyllysine; alternate). Lys103 carries the post-translational modification N6-succinyllysine; alternate. N6-acetyllysine is present on residues Lys132 and Lys177. Substrate is bound at residue Met196. Cys209 acts as the Proton acceptor in catalysis. The residue at position 212 (Lys212) is an N6-acetyllysine. O-linked (GlcNAc) serine glycosylation occurs at Ser219. Ser246 bears the Phosphoserine mark. At Lys258 the chain carries N6-acetyllysine. Lys259 carries the post-translational modification N6-acetyllysine; alternate. An N6-succinyllysine; alternate modification is found at Lys259. N6-acetyllysine is present on Lys280.

Belongs to the short-chain dehydrogenases/reductases (SDR) family. Homotetramer. Post-translationally, acetylation of Lys-132 is observed in liver mitochondria from fasted mice but not from fed mice.

Its subcellular location is the mitochondrion inner membrane. The protein resides in the mitochondrion matrix. The enzyme catalyses (R)-3-hydroxybutanoate + NAD(+) = acetoacetate + NADH + H(+). Requires phosphatidylcholine as an allosteric activator for enzymatic activity. In Mus musculus (Mouse), this protein is D-beta-hydroxybutyrate dehydrogenase, mitochondrial.